The sequence spans 592 residues: A-type ATP synthase subunit A (592 aa).

233–240 contacts ATP; sequence GPFGSGKT.

Belongs to the ATPase alpha/beta chains family. In terms of assembly, has multiple subunits with at least A(3), B(3), C, D, E, F, H, I and proteolipid K(x).

It localises to the cell membrane. The enzyme catalyses ATP + H2O + 4 H(+)(in) = ADP + phosphate + 5 H(+)(out). Functionally, component of the A-type ATP synthase that produces ATP from ADP in the presence of a proton gradient across the membrane. The A chain is the catalytic subunit. The chain is A-type ATP synthase subunit A from Saccharolobus islandicus (strain Y.N.15.51 / Yellowstone #2) (Sulfolobus islandicus).